The following is a 111-amino-acid chain: Nucleoid-associated protein Teth514_0034 (111 aa).

The protein belongs to the YbaB/EbfC family. As to quaternary structure, homodimer.

It is found in the cytoplasm. The protein resides in the nucleoid. Functionally, binds to DNA and alters its conformation. May be involved in regulation of gene expression, nucleoid organization and DNA protection. The polypeptide is Nucleoid-associated protein Teth514_0034 (Thermoanaerobacter sp. (strain X514)).